Here is a 156-residue protein sequence, read N- to C-terminus: 16 kDa phloem protein 1 (156 aa).

The C2 domain occupies Met-1 to Ala-108. Asp-20, Asp-26, Asp-78, Asp-80, Ser-83, and Asp-86 together coordinate Ca(2+).

The cofactor is Ca(2+).

In terms of biological role, binds to both sense and antisense RNA. Can also bind sheared DNA and dodecamer DNA with a low affinity. Interacts with mesophyll plasmodesmata to mediate its own cell-to-cell transport and potentiate RNA trafficking. May play a role in plant defense signaling. The protein is 16 kDa phloem protein 1 of Arabidopsis thaliana (Mouse-ear cress).